The chain runs to 760 residues: Formin-like protein 8 (760 aa).

An N-terminal signal peptide occupies residues 1-29; sequence MAAMFNHPWPNLTLIYFFFIVVLPFQSLS. Positions 52–63 are enriched in pro residues; it reads PLLPPSSNPSPP. The disordered stretch occupies residues 52–71; the sequence is PLLPPSSNPSPPSNNSSSSD. A helical transmembrane segment spans residues 78-98; sequence AVLITAASTLLVAGVFFFCLQ. The disordered stretch occupies residues 204 to 313; the sequence is TEIPLLRGRS…VKLKPLHWDK (110 aa). Residues 253–274 are compositionally biased toward pro residues; the sequence is TPSPPPPIKKGSSPSPPPPPPV. Residues 296 to 732 form the FH2 domain; sequence SGGETSKQVK…GSPISPSSQR (437 aa).

This sequence belongs to the formin-like family. Class-I subfamily. Interacts with profilin.

It localises to the cell membrane. Functionally, might be involved in the organization and polarity of the actin cytoskeleton. Interacts with the barbed end of actin filaments and nucleates actin-filament polymerization in vitro. This is Formin-like protein 8 (FH8) from Arabidopsis thaliana (Mouse-ear cress).